An 830-amino-acid chain; its full sequence is Adhesion G protein-coupled receptor E2 (830 aa).

A signal peptide spans 1-22 (MRHGHPRLLPGLLMLLLLPLGA). Residues 23-540 (AAQKTSGCAR…MAHYDVQEED (518 aa)) are Extracellular-facing. The region spanning 26 to 68 (KTSGCARWCPPKSTCVNATTCRCSPGFSSLSGEIFSSPLESCD) is the EGF-like 1 domain. 5 disulfides stabilise this stretch: Cys-30–Cys-40, Cys-34–Cys-46, Cys-48–Cys-67, Cys-73–Cys-87, and Cys-81–Cys-96. Residue Asn-42 is glycosylated (N-linked (GlcNAc...) asparagine). Residues 69 to 108 (DIDECGPPPLVSCGRLADCQNTEGSYHCMCSPGYALASGA) enclose the EGF-like 1; calcium-binding domain. N-linked (GlcNAc...) asparagine glycosylation occurs at Asn-113. The region spanning 121–159 (DVDECQLKPRVCKSRGICTNTKGSYTCKCPPGFELNLGD) is the EGF-like 2; calcium-binding domain. 6 cysteine pairs are disulfide-bonded: Cys-125/Cys-138, Cys-132/Cys-147, Cys-169/Cys-182, Cys-176/Cys-191, Cys-218/Cys-231, and Cys-225/Cys-240. In terms of domain architecture, EGF-like 3; calcium-binding spans 165-203 (DVNECTSGQNPCHNSTHCLNNIGGYECRCRPGWKPVPGS). N-linked (GlcNAc...) asparagine glycosylation occurs at Asn-178. The 40-residue stretch at 214-253 (DVDECSSGKHTCHYSTVCINTVGSYKCRCRRGWKPKPRFQ) folds into the EGF-like 4; calcium-binding domain. N-linked (GlcNAc...) asparagine glycans are attached at residues Asn-258, Asn-348, Asn-361, and Asn-379. Residues 358–537 (WTFNASAGTD…AVLMAHYDVQ (180 aa)) form the GAIN-B domain. 2 disulfides stabilise this stretch: Cys-489–Cys-519 and Cys-507–Cys-521. Residues 489 to 537 (CVFWEHSQDECGHWSTRGCTVVDSGDTSTTCQCTHLSSFAVLMAHYDVQ) form a GPS region. A helical transmembrane segment spans residues 541–561 (LVLPVITYVGLGLSLLCLLLA). The Cytoplasmic segment spans residues 562–576 (ALTFLLCKAIQNTST). A helical transmembrane segment spans residues 577–597 (SLHLQLLICLFLAHLLFLMAI). Over 598 to 603 (DRTEIK) the chain is Extracellular. A helical membrane pass occupies residues 604 to 624 (VLCSIIAGALHYLYLASFTWM). Over 625–651 (LLEGLHLFLTARNLMVVNYSSVSMLMK) the chain is Cytoplasmic. The helical transmembrane segment at 652–672 (KLMYPVGYGVPTLIVAISAAS) threads the bilayer. The Extracellular segment spans residues 673-690 (RSHLYGTRTRCWLNPEER). A helical membrane pass occupies residues 691–711 (FIWSFLGPVCTIFSVNLGFFL). The Cytoplasmic segment spans residues 712–744 (MTLWILKSKLSSLNSDVSTLQNTRMLTFKAIAQ). Residues 745-765 (LFILGCTWCLGILQVGPAAHV) traverse the membrane as a helical segment. The Extracellular portion of the chain corresponds to 766–767 (MA). A helical transmembrane segment spans residues 768–788 (YLFTIINSLQGVFIFLVYCLL). Residues 789–830 (SQQVREEYGKWFKGIRKTRAESEKYTLSSRAMSDVNKPMMVN) are Cytoplasmic-facing.

The protein belongs to the G-protein coupled receptor 2 family. Adhesion G-protein coupled receptor (ADGR) subfamily. Forms a heterodimer, consisting of a large extracellular region non-covalently linked to a seven-transmembrane moiety. Interacts with chondroitin sulfate; the interaction with chondroitin sulfate is calcium-dependent. Interacts with CD55. In terms of processing, autoproteolytically cleaved into 2 subunits, an extracellular alpha subunit and a seven-transmembrane beta subunit.

Its subcellular location is the cell membrane. The protein resides in the cell projection. It localises to the ruffle membrane. Its function is as follows. Cell surface receptor that binds to the chondroitin sulfate moiety of glycosaminoglycan chains and promotes cell attachment. Promotes granulocyte chemotaxis, degranulation and adhesion. In macrophages, promotes the release of inflammatory cytokines, including IL8 and TNF. Signals probably through G-proteins. The polypeptide is Adhesion G protein-coupled receptor E2 (ADGRE2) (Canis lupus familiaris (Dog)).